The following is a 155-amino-acid chain: UPF0735 ACT domain-containing protein CA_C1234 (155 aa).

The region spanning 79–154 (TISILIEHRR…NVLKVEIVAM (76 aa)) is the ACT domain.

Belongs to the UPF0735 family.

The sequence is that of UPF0735 ACT domain-containing protein CA_C1234 from Clostridium acetobutylicum (strain ATCC 824 / DSM 792 / JCM 1419 / IAM 19013 / LMG 5710 / NBRC 13948 / NRRL B-527 / VKM B-1787 / 2291 / W).